We begin with the raw amino-acid sequence, 129 residues long: Glycine cleavage system H protein (129 aa).

Residues 23–104 enclose the Lipoyl-binding domain; that stretch reads SVTVGITHHA…AYTAWLFKIK (82 aa). The residue at position 64 (K64) is an N6-lipoyllysine.

Belongs to the GcvH family. As to quaternary structure, the glycine cleavage system is composed of four proteins: P, T, L and H. The cofactor is (R)-lipoate.

Its function is as follows. The glycine cleavage system catalyzes the degradation of glycine. The H protein shuttles the methylamine group of glycine from the P protein to the T protein. The sequence is that of Glycine cleavage system H protein from Thiobacillus denitrificans (strain ATCC 25259 / T1).